A 247-amino-acid polypeptide reads, in one-letter code: C-type lectin domain family 7 member A (247 aa).

At 1-44 (MEYQSSVENLDEDGYTQLDFSSRNITRRSVVSEKGLCAASSHWR) the chain is on the cytoplasmic side. The short motif at 15 to 18 (YTQL) is the ITAM-like element. A helical; Signal-anchor for type II membrane protein transmembrane segment spans residues 45 to 65 (LIAVTLGILCSVMLVITVVLS). Over 66–247 (TSGIWRSSSG…YSICEKKLSV (182 aa)) the chain is Extracellular. Residues 81–101 (SDSFPSRNKDNQSQPTQSSLE) are compositionally biased toward polar residues. The segment at 81 to 103 (SDSFPSRNKDNQSQPTQSSLEDS) is disordered. Asparagine 91 carries N-linked (GlcNAc...) asparagine glycosylation. 3 disulfide bridges follow: cysteine 120–cysteine 131, cysteine 148–cysteine 241, and cysteine 220–cysteine 233. Positions 127–242 (HEDSCYLFST…CSVHSYSICE (116 aa)) constitute a C-type lectin domain. A (1,3-beta-D-glucosyl)n-binding site is contributed by 146-153 (RQCFQLGS). Residues lysine 157, aspartate 159, and glutamate 163 each coordinate a divalent metal cation. Glutamate 195 is a binding site for (1,3-beta-D-glucosyl)n. Position 242 (glutamate 242) interacts with a divalent metal cation.

Homodimer. Interacts with SYK; participates in leukocyte activation in presence of fungal pathogens. Interacts with CD37; this interaction controls CLEC7A-mediated IL-6 production. Phosphorylated on tyrosine residues in response to beta-glucan binding. In terms of tissue distribution, detected in bone marrow, monocytes, macrophages, dendritic cells and natural killer cells.

It localises to the cell membrane. Functionally, lectin that functions as a pattern recognizing receptor (PRR) specific for beta-1,3-linked and beta-1,6-linked glucans, which constitute cell wall constituents from pathogenic bacteria and fungi. Necessary for the TLR2-mediated inflammatory response and activation of NF-kappa-B: upon beta-glucan binding, recruits SYK via its ITAM motif and promotes a signaling cascade that activates some CARD domain-BCL10-MALT1 (CBM) signalosomes, leading to the activation of NF-kappa-B and MAP kinase p38 (MAPK11, MAPK12, MAPK13 and/or MAPK14) pathways which stimulate expression of genes encoding pro-inflammatory cytokines and chemokines. Enhances cytokine production in macrophages and dendritic cells. Mediates production of reactive oxygen species in the cell. Mediates phagocytosis of C.albicans conidia. Binds T-cells in a way that does not involve their surface glycans and plays a role in T-cell activation. Stimulates T-cell proliferation. Induces phosphorylation of SCIMP after binding beta-glucans. In Bos taurus (Bovine), this protein is C-type lectin domain family 7 member A (CLEC7A).